Here is a 260-residue protein sequence, read N- to C-terminus: Indole-3-glycerol phosphate synthase (260 aa).

Belongs to the TrpC family.

The enzyme catalyses 1-(2-carboxyphenylamino)-1-deoxy-D-ribulose 5-phosphate + H(+) = (1S,2R)-1-C-(indol-3-yl)glycerol 3-phosphate + CO2 + H2O. It participates in amino-acid biosynthesis; L-tryptophan biosynthesis; L-tryptophan from chorismate: step 4/5. The chain is Indole-3-glycerol phosphate synthase from Staphylococcus aureus (strain MSSA476).